Here is a 261-residue protein sequence, read N- to C-terminus: Tryptophan synthase alpha chain (261 aa).

Residues E47 and D58 each act as proton acceptor in the active site.

It belongs to the TrpA family. Tetramer of two alpha and two beta chains.

It carries out the reaction (1S,2R)-1-C-(indol-3-yl)glycerol 3-phosphate + L-serine = D-glyceraldehyde 3-phosphate + L-tryptophan + H2O. It functions in the pathway amino-acid biosynthesis; L-tryptophan biosynthesis; L-tryptophan from chorismate: step 5/5. Functionally, the alpha subunit is responsible for the aldol cleavage of indoleglycerol phosphate to indole and glyceraldehyde 3-phosphate. The chain is Tryptophan synthase alpha chain from Neisseria gonorrhoeae (strain ATCC 700825 / FA 1090).